A 154-amino-acid polypeptide reads, in one-letter code: MutT-like protein (154 aa).

Residues 15–136 (PLHSVSVAGV…YAIRLLDALD (122 aa)) enclose the Nudix hydrolase domain. Mg(2+) is bound by residues Gly-48, Glu-63, Glu-66, and Glu-67. The Nudix box signature appears at 48-69 (GVLELDETPETGVAREVWEETG).

Belongs to the Nudix hydrolase family.

The sequence is that of MutT-like protein from Streptomyces ambofaciens.